A 239-amino-acid polypeptide reads, in one-letter code: Proteasome subunit beta type-6 (239 aa).

At Ala2 the chain carries N-acetylalanine. A propeptide spans 2–34 (AATLVAARGTRPAPAWGPEAIAPDWENREVSTG) (removed in mature form). Thr35 acts as the Nucleophile in catalysis. The residue at position 69 (Thr69) is a Phosphothreonine.

Belongs to the peptidase T1B family. In terms of assembly, the 26S proteasome consists of a 20S proteasome core and two 19S regulatory subunits. The 20S proteasome core is a barrel-shaped complex made of 28 subunits that are arranged in four stacked rings. The two outer rings are each formed by seven alpha subunits, and the two inner rings are formed by seven beta subunits. The proteolytic activity is exerted by three beta-subunits PSMB5, PSMB6 and PSMB7.

The protein resides in the cytoplasm. It localises to the nucleus. The enzyme catalyses Cleavage of peptide bonds with very broad specificity.. In terms of biological role, component of the 20S core proteasome complex involved in the proteolytic degradation of most intracellular proteins. This complex plays numerous essential roles within the cell by associating with different regulatory particles. Associated with two 19S regulatory particles, forms the 26S proteasome and thus participates in the ATP-dependent degradation of ubiquitinated proteins. The 26S proteasome plays a key role in the maintenance of protein homeostasis by removing misfolded or damaged proteins that could impair cellular functions, and by removing proteins whose functions are no longer required. Associated with the PA200 or PA28, the 20S proteasome mediates ubiquitin-independent protein degradation. This type of proteolysis is required in several pathways including spermatogenesis (20S-PA200 complex) or generation of a subset of MHC class I-presented antigenic peptides (20S-PA28 complex). Within the 20S core complex, PSMB6 displays a peptidylglutamyl-hydrolyzing activity also termed postacidic or caspase-like activity, meaning that the peptides bond hydrolysis occurs directly after acidic residues. The chain is Proteasome subunit beta type-6 (PSMB6) from Bos taurus (Bovine).